A 334-amino-acid polypeptide reads, in one-letter code: Malate dehydrogenase, cytoplasmic (334 aa).

11–17 contacts NAD(+); it reads GAAGQIA. Arg-92 and Arg-98 together coordinate substrate. NAD(+)-binding positions include Asn-105, Gln-112, and 129 to 131; that span reads VGN. 2 residues coordinate substrate: Asn-131 and Arg-162. His-187 serves as the catalytic Proton acceptor.

The protein belongs to the LDH/MDH superfamily. MDH type 2 family. As to quaternary structure, homodimer.

Its subcellular location is the cytoplasm. The protein resides in the cytosol. It catalyses the reaction (S)-malate + NAD(+) = oxaloacetate + NADH + H(+). It carries out the reaction (S)-2-hydroxyglutarate + NAD(+) = 2-oxoglutarate + NADH + H(+). Functionally, catalyzes the reduction of aromatic alpha-keto acids in the presence of NADH. Plays essential roles in the malate-aspartate shuttle and the tricarboxylic acid cycle, important in mitochondrial NADH supply for oxidative phosphorylation. Catalyzes the reduction of 2-oxoglutarate to 2-hydroxyglutarate, leading to elevated reactive oxygen species (ROS). The sequence is that of Malate dehydrogenase, cytoplasmic (mdh1) from Xenopus laevis (African clawed frog).